The sequence spans 248 residues: Triosephosphate isomerase (248 aa).

9–11 is a substrate binding site; the sequence is NWK. His-94 serves as the catalytic Electrophile. Glu-166 acts as the Proton acceptor in catalysis. Substrate contacts are provided by residues Gly-172, Ser-211, and 232–233; that span reads GG.

It belongs to the triosephosphate isomerase family. As to quaternary structure, homodimer.

It localises to the cytoplasm. The catalysed reaction is D-glyceraldehyde 3-phosphate = dihydroxyacetone phosphate. The protein operates within carbohydrate biosynthesis; gluconeogenesis. Its pathway is carbohydrate degradation; glycolysis; D-glyceraldehyde 3-phosphate from glycerone phosphate: step 1/1. In terms of biological role, involved in the gluconeogenesis. Catalyzes stereospecifically the conversion of dihydroxyacetone phosphate (DHAP) to D-glyceraldehyde-3-phosphate (G3P). The chain is Triosephosphate isomerase from Ruthia magnifica subsp. Calyptogena magnifica.